Here is a 429-residue protein sequence, read N- to C-terminus: Adenylosuccinate synthetase (429 aa).

Residues 13 to 19 and 41 to 43 each bind GTP; these read GDEGKGK and GHT. D14 serves as the catalytic Proton acceptor. Residues D14 and G41 each contribute to the Mg(2+) site. IMP contacts are provided by residues 14-17, 39-42, T130, R144, Q224, T239, and R303; these read DEGK and NAGH. Catalysis depends on H42, which acts as the Proton donor. Residue 299–305 participates in substrate binding; it reads ATTGRAR. GTP contacts are provided by residues R305, 331 to 333, and 412 to 414; these read KLD and STG.

Belongs to the adenylosuccinate synthetase family. As to quaternary structure, homodimer. Mg(2+) is required as a cofactor.

Its subcellular location is the cytoplasm. The catalysed reaction is IMP + L-aspartate + GTP = N(6)-(1,2-dicarboxyethyl)-AMP + GDP + phosphate + 2 H(+). It functions in the pathway purine metabolism; AMP biosynthesis via de novo pathway; AMP from IMP: step 1/2. Its function is as follows. Plays an important role in the de novo pathway of purine nucleotide biosynthesis. Catalyzes the first committed step in the biosynthesis of AMP from IMP. The protein is Adenylosuccinate synthetase of Psychrobacter arcticus (strain DSM 17307 / VKM B-2377 / 273-4).